Here is a 199-residue protein sequence, read N- to C-terminus: Inner membrane protein E199L (199 aa).

Residues 150 to 170 (INVMNHPFLTLILIILILIII) form a helical membrane-spanning segment.

It belongs to the asfivirus E199L family. Interacts with host PYCR2; this interaction results in autophagy activation. In terms of processing, contains intramolecular disulfide bonds.

It is found in the virion membrane. The protein localises to the host membrane. Functionally, essential for viral fusion with host endosomal membrane and core release. Not required for virus morphogenesis and egress. Induces complete autophagy through the interaction with and down-regulation of host PYCR2. The chain is Inner membrane protein E199L from Ornithodoros (relapsing fever ticks).